We begin with the raw amino-acid sequence, 192 residues long: Xanthine phosphoribosyltransferase (192 aa).

Residues leucine 20 and asparagine 27 each contribute to the xanthine site. Residue 128-132 participates in 5-phospho-alpha-D-ribose 1-diphosphate binding; the sequence is ANGDA. Residue lysine 156 coordinates xanthine.

The protein belongs to the purine/pyrimidine phosphoribosyltransferase family. Xpt subfamily. In terms of assembly, homodimer.

Its subcellular location is the cytoplasm. The catalysed reaction is XMP + diphosphate = xanthine + 5-phospho-alpha-D-ribose 1-diphosphate. Its pathway is purine metabolism; XMP biosynthesis via salvage pathway; XMP from xanthine: step 1/1. Converts the preformed base xanthine, a product of nucleic acid breakdown, to xanthosine 5'-monophosphate (XMP), so it can be reused for RNA or DNA synthesis. The chain is Xanthine phosphoribosyltransferase from Staphylococcus carnosus (strain TM300).